Here is a 301-residue protein sequence, read N- to C-terminus: Light-independent protochlorophyllide reductase iron-sulfur ATP-binding protein (301 aa).

The segment covering 1-13 has biased composition (low complexity); sequence MNVTLRPPLTTAP. The disordered stretch occupies residues 1–21; sequence MNVTLRPPLTTAPRRPDGAGS. ATP is bound by residues 45-50 and K74; that span reads GIGKST. S49 is a binding site for Mg(2+). The [4Fe-4S] cluster site is built by C130 and C164. ATP is bound by residues 215-216 and 239-241; these read NR and PDL.

This sequence belongs to the NifH/BchL/ChlL family. In terms of assembly, homodimer. Protochlorophyllide reductase is composed of three subunits; BchL, BchN and BchB. [4Fe-4S] cluster serves as cofactor.

It catalyses the reaction chlorophyllide a + oxidized 2[4Fe-4S]-[ferredoxin] + 2 ADP + 2 phosphate = protochlorophyllide a + reduced 2[4Fe-4S]-[ferredoxin] + 2 ATP + 2 H2O. It functions in the pathway porphyrin-containing compound metabolism; bacteriochlorophyll biosynthesis (light-independent). Its function is as follows. Component of the dark-operative protochlorophyllide reductase (DPOR) that uses Mg-ATP and reduced ferredoxin to reduce ring D of protochlorophyllide (Pchlide) to form chlorophyllide a (Chlide). This reaction is light-independent. The L component serves as a unique electron donor to the NB-component of the complex, and binds Mg-ATP. This chain is Light-independent protochlorophyllide reductase iron-sulfur ATP-binding protein, found in Bradyrhizobium sp. (strain BTAi1 / ATCC BAA-1182).